Consider the following 512-residue polypeptide: MKKQHDTIIVLDFGSQYNQLIARRIREFGVYSELHPHTITAEEIKAMNPKGIIFSGGPNSVYGEGALHCDEKIFDLGLPIFGICYGMQLMTQQFGGTVERANHREYGKAVLKVENESKLYANLPEEQVVWMSHGDLVTGLPEGFVVDATSESCPIAGMSNEAKNLYGVQFHPEVRHSEHGNDLIKNFVFGVCGCSEGWNMENFIEVELEKIRETVGDKKVLCALSGGVDSSVVAVLIHKAIGDQLTCIFVDHGLLRKGEAEGVMKTFSEGFHMNVIKVDAKERFMNKLKGVEDPEQKRKIIGNEFIYVFDDEASKLEGMDFLAQGTLYTDIVESGTATAQTIKSHHNVGGLPEDMQFKLIEPLNTLFKDEVRVLGSELGIPDEIVWRQPFPGPGLGIRVLGEITEEKLEIVRESDAILREEIIKAGLDREIWQYFTALPGMRSVGVMGDERTYDYTVGIRAVTSIDGMTADWARIPWDVLEKISVRIVNEVKHVNRIVYDVTSKPPATIEWE.

A Glutamine amidotransferase type-1 domain is found at 7 to 197; the sequence is TIIVLDFGSQ…VFGVCGCSEG (191 aa). The Nucleophile role is filled by cysteine 84. Residues histidine 171 and glutamate 173 contribute to the active site. The GMPS ATP-PPase domain maps to 198 to 387; the sequence is WNMENFIEVE…LGIPDEIVWR (190 aa). ATP is bound at residue 225 to 231; the sequence is SGGVDSS.

As to quaternary structure, homodimer.

The catalysed reaction is XMP + L-glutamine + ATP + H2O = GMP + L-glutamate + AMP + diphosphate + 2 H(+). It participates in purine metabolism; GMP biosynthesis; GMP from XMP (L-Gln route): step 1/1. In terms of biological role, catalyzes the synthesis of GMP from XMP. This is GMP synthase [glutamine-hydrolyzing] from Bacillus anthracis.